The following is a 541-amino-acid chain: MAKDIKFSADARESMVRGVDILADTVKVTLGPKGRNVVLEKAFGSPLITNDGVTIAKEIELEDHFENMGAKLVSEVASKTNDIAGDGTTTATVLTQAIVREGLKNVTAGANPIGIRRGIEAATTTAVEALKAVAQPVSGKEAIAQVASVSSRSEKVGDYISEAMERVGNDGVITIEESRGMETELEVVEGMQFDRGYLSQYMVTDNEKMVADLENPFILITDKKISNIQDILPLLEEVLKTSRPLLIIADDVDGEALPTLVLNKIRGTFNVVAVKAPGFGDRRKAMLEDIAVLTGGTVITEDLGLELKDATMAALGQAAKVTVDKDNTVIVEGAGSSEAISNRVSLIKSQLETTTSEFDREKLQERLAKLAGGVAVIKVGAATETELKEMKLRIEDALNATRAAVEEGIVAGGGTALINVMDKVAALELDGDAATGRNIVLRALEEPVRQIAYNAGYEGSVIIDKLKNSAAGIGFNAATGEWVDMIATGIIDPVKVTRSALQNAASVAGLILTTEAVVATKPEPAAPAMPQGMDPGMMGGF.

ATP is bound by residues 29-32 (TLGP), 86-90 (DGTTT), Gly-413, 476-478 (NAA), and Asp-492.

The protein belongs to the chaperonin (HSP60) family. In terms of assembly, forms a cylinder of 14 subunits composed of two heptameric rings stacked back-to-back. Interacts with the co-chaperonin GroES.

The protein localises to the cytoplasm. The catalysed reaction is ATP + H2O + a folded polypeptide = ADP + phosphate + an unfolded polypeptide.. Its function is as follows. Together with its co-chaperonin GroES, plays an essential role in assisting protein folding. The GroEL-GroES system forms a nano-cage that allows encapsulation of the non-native substrate proteins and provides a physical environment optimized to promote and accelerate protein folding. The polypeptide is Chaperonin GroEL (Streptococcus equi subsp. equi (strain 4047)).